A 3371-amino-acid polypeptide reads, in one-letter code: Protocadherin-23 (3371 aa).

The disordered stretch occupies residues 1–40 (MSPCGRKMGEGRQQRRAPVGKLLLLPGRRDTPHGRSGSSG). Residues 1 to 46 (MSPCGRKMGEGRQQRRAPVGKLLLLPGRRDTPHGRSGSSGARTQRS) are Cytoplasmic-facing. A helical membrane pass occupies residues 47–67 (LLWLLVHVWLWAASGSSAQLF). Cadherin domains are found at residues 65-167 (QLFN…SPRF), 168-296 (PLDS…PPVF), 297-413 (EQDE…RPAI), 424-539 (ARVS…PPLF), 540-663 (SQQH…EPIF), 664-771 (WRQV…HPVF), 772-881 (NPST…RPKY), 877-979 (ERPK…HPAF), 980-1082 (LRTS…SPSW), 1085-1191 (EHLV…SPTF), 1192-1294 (LHDV…RPFF), 1299-1415 (PGKE…IPEN), 1404-1510 (SQNI…SPSF), 1511-1620 (QDEL…NPTF), 1620-1724 (FISF…APVF), 1725-1829 (KQHL…APEF), 1830-1933 (IVSS…SPSF), 1934-2038 (PTLY…DPVL), 2039-2130 (EQNP…VIHM), 2140-2242 (SHHL…SPCF), 2243-2347 (EQSI…APAF), 2347-2447 (FLPS…PPVF), 2448-2549 (SQDF…APEF), 2550-2665 (TVKS…PPNF), 2666-2769 (SSLS…APQF), 2770-2880 (MFSS…EPIF), and 2881-2988 (TQDQ…TPLA). Topologically, residues 68–2986 (NLTLSVDEGL…NVSFSSEGTP (2919 aa)) are extracellular. N-linked (GlcNAc...) asparagine glycosylation is found at N669, N772, N814, N905, N966, N1038, N1172, and N1275. N-linked (GlcNAc...) asparagine glycans are attached at residues N1487, N1595, N1617, and N1664. N1898 is a glycosylation site (N-linked (GlcNAc...) asparagine). N2054, N2070, and N2098 each carry an N-linked (GlcNAc...) asparagine glycan. Residue N2329 is glycosylated (N-linked (GlcNAc...) asparagine). N-linked (GlcNAc...) asparagine glycosylation is found at N2479, N2497, N2555, and N2664. N-linked (GlcNAc...) asparagine glycosylation is found at N2929 and N2977. A helical membrane pass occupies residues 2987–3017 (LAVFASSFSISLVVSFLVFLILICILIVMIL). The Cytoplasmic segment spans residues 3018–3371 (RHKQKDTINN…ELKAEDEVQI (354 aa)). Residues 3117-3140 (KCSDSALSDHESRVPDSGIPRDSD) are compositionally biased toward basic and acidic residues. The segment at 3117–3141 (KCSDSALSDHESRVPDSGIPRDSDQ) is disordered.

As to expression, cerebral cortex and testis.

Its subcellular location is the membrane. Calcium-dependent cell-adhesion protein. This is Protocadherin-23 (DCHS2) from Homo sapiens (Human).